The primary structure comprises 947 residues: Translation initiation factor IF-2 (947 aa).

Residues 47 to 332 (LRESFGGGKS…RGRKSKRAKR (286 aa)) are disordered. Over residues 86-95 (APDRSLDAAL) the composition is skewed to basic and acidic residues. A compositionally biased stretch (pro residues) spans 105 to 123 (APVPAPAPAPTPAPAPAPA). A compositionally biased stretch (low complexity) spans 131–145 (APPAATPAAPAASAA). Composition is skewed to pro residues over residues 146 to 171 (PAPPKAPLPGQRPAPTPGKPAAPQAP) and 210 to 225 (PRPQAPRPGAPRPGAP). Positions 255–318 (RPGGGRPGGP…GAAGAFGRPG (64 aa)) are enriched in gly residues. The segment covering 322–331 (RRGRKSKRAK) has biased composition (basic residues). Residues 443–614 (TRPPVVTVMG…AVLLTADAAL (172 aa)) form the tr-type G domain. Positions 452-459 (GHVDHGKT) are G1. GTP is bound at residue 452–459 (GHVDHGKT). The interval 477–481 (GITQH) is G2. The tract at residues 502–505 (DTPG) is G3. GTP is bound by residues 502–506 (DTPGH) and 556–559 (NKID). The G4 stretch occupies residues 556-559 (NKID). The G5 stretch occupies residues 592–594 (SAK).

Belongs to the TRAFAC class translation factor GTPase superfamily. Classic translation factor GTPase family. IF-2 subfamily.

Its subcellular location is the cytoplasm. In terms of biological role, one of the essential components for the initiation of protein synthesis. Protects formylmethionyl-tRNA from spontaneous hydrolysis and promotes its binding to the 30S ribosomal subunits. Also involved in the hydrolysis of GTP during the formation of the 70S ribosomal complex. The polypeptide is Translation initiation factor IF-2 (Mycobacterium marinum (strain ATCC BAA-535 / M)).